A 164-amino-acid polypeptide reads, in one-letter code: Elicitin-like protein 2 (164 aa).

A signal peptide spans 1–22 (MFSKTLVVLAAVAAVTVNGLTA). Cystine bridges form between C25-C91, C47-C76, and C71-C118. The tract at residues 121–164 (ISGGGSTPTTAPPSGTTPTTPTTAPPTGTTPGVTPSPTTPKPAC) is disordered. Residues 127-156 (TPTTAPPSGTTPTTPTTAPPTGTTPGVTPS) show a composition bias toward low complexity.

This sequence belongs to the elicitin family.

The protein resides in the secreted. In terms of biological role, induces local and distal defense responses (incompatible hypersensitive reaction) in plants from the solanaceae and cruciferae families. Elicits leaf necrosis and causes the accumulation of pathogenesis-related proteins. Might interact with the lipidic molecules of the plasma membrane. The polypeptide is Elicitin-like protein 2 (POD-2) (Pythium oligandrum (Mycoparasitic fungus)).